The following is a 137-amino-acid chain: Aspartate 1-decarboxylase (137 aa).

Ser-25 acts as the Schiff-base intermediate with substrate; via pyruvic acid in catalysis. Ser-25 bears the Pyruvic acid (Ser) mark. Thr-57 is a binding site for substrate. Catalysis depends on Tyr-58, which acts as the Proton donor. Residue 73–75 (GAA) participates in substrate binding.

This sequence belongs to the PanD family. In terms of assembly, heterooctamer of four alpha and four beta subunits. It depends on pyruvate as a cofactor. Is synthesized initially as an inactive proenzyme, which is activated by self-cleavage at a specific serine bond to produce a beta-subunit with a hydroxyl group at its C-terminus and an alpha-subunit with a pyruvoyl group at its N-terminus.

It is found in the cytoplasm. The enzyme catalyses L-aspartate + H(+) = beta-alanine + CO2. The protein operates within cofactor biosynthesis; (R)-pantothenate biosynthesis; beta-alanine from L-aspartate: step 1/1. In terms of biological role, catalyzes the pyruvoyl-dependent decarboxylation of aspartate to produce beta-alanine. In Thermobifida fusca (strain YX), this protein is Aspartate 1-decarboxylase.